Consider the following 75-residue polypeptide: Lividin-3 (75 aa).

The first 22 residues, 1 to 22 (MFTLKKSLLLLFFLGTISLSLC), serve as a signal peptide directing secretion. Positions 23–40 (EEERDADEDEGEMTEEEV) are excised as a propeptide. A disulfide bridge connects residues Cys-69 and Cys-75.

As to expression, expressed by the skin glands.

It is found in the secreted. Its function is as follows. Antimicrobial peptide. The chain is Lividin-3 from Odorrana livida (Green mountain frog).